We begin with the raw amino-acid sequence, 464 residues long: Nuclear distribution protein nudF 2 (464 aa).

Positions 9-41 (QAAELNKSIIAYLSAHGLAETLAAFRKESDFPD) constitute a LisH domain. The stretch at 63–88 (NSTLMKKLLALESHNKALRNELNSTR) forms a coiled coil. WD repeat units follow at residues 112 to 151 (SHRD…LERT), 154 to 195 (GHTM…KNVK), 199 to 238 (GHDH…RVKT), 241 to 280 (DHTG…PICK), 285 to 343 (GHEN…MTLT), 344 to 383 (GHAS…RCVK), 388 to 424 (AHDG…AELP), and 426 to 464 (SKLD…RSHK).

This sequence belongs to the WD repeat LIS1/nudF family. As to quaternary structure, self-associates. Interacts with nudE and dynein.

It localises to the cytoplasm. The protein localises to the cytoskeleton. Its subcellular location is the spindle pole. Its function is as follows. Positively regulates the activity of the minus-end directed microtubule motor protein dynein. May enhance dynein-mediated microtubule sliding by targeting dynein to the microtubule plus end. Required for nuclear migration during vegetative growth as well as development. Required for retrograde early endosome (EE) transport from the hyphal tip. Required for localization of dynein to the mitotic spindle poles. Recruits additional proteins to the dynein complex at SPBs. This Penicillium rubens (strain ATCC 28089 / DSM 1075 / NRRL 1951 / Wisconsin 54-1255) (Penicillium chrysogenum) protein is Nuclear distribution protein nudF 2.